The primary structure comprises 300 residues: Aspartate carbamoyltransferase catalytic subunit (300 aa).

Carbamoyl phosphate contacts are provided by R50 and T51. Residue K78 participates in L-aspartate binding. Carbamoyl phosphate is bound by residues R100, H127, and Q130. L-aspartate-binding residues include R160 and R210. Carbamoyl phosphate is bound by residues A253 and P254.

The protein belongs to the aspartate/ornithine carbamoyltransferase superfamily. ATCase family. Heterododecamer (2C3:3R2) of six catalytic PyrB chains organized as two trimers (C3), and six regulatory PyrI chains organized as three dimers (R2).

The catalysed reaction is carbamoyl phosphate + L-aspartate = N-carbamoyl-L-aspartate + phosphate + H(+). Its pathway is pyrimidine metabolism; UMP biosynthesis via de novo pathway; (S)-dihydroorotate from bicarbonate: step 2/3. Functionally, catalyzes the condensation of carbamoyl phosphate and aspartate to form carbamoyl aspartate and inorganic phosphate, the committed step in the de novo pyrimidine nucleotide biosynthesis pathway. In Staphylococcus saprophyticus subsp. saprophyticus (strain ATCC 15305 / DSM 20229 / NCIMB 8711 / NCTC 7292 / S-41), this protein is Aspartate carbamoyltransferase catalytic subunit.